Here is a 190-residue protein sequence, read N- to C-terminus: Xanthine phosphoribosyltransferase (190 aa).

2 residues coordinate xanthine: leucine 20 and asparagine 27. 128-132 (ANGNA) is a binding site for 5-phospho-alpha-D-ribose 1-diphosphate. Lysine 156 contacts xanthine.

This sequence belongs to the purine/pyrimidine phosphoribosyltransferase family. Xpt subfamily. Homodimer.

The protein resides in the cytoplasm. The enzyme catalyses XMP + diphosphate = xanthine + 5-phospho-alpha-D-ribose 1-diphosphate. The protein operates within purine metabolism; XMP biosynthesis via salvage pathway; XMP from xanthine: step 1/1. Its function is as follows. Converts the preformed base xanthine, a product of nucleic acid breakdown, to xanthosine 5'-monophosphate (XMP), so it can be reused for RNA or DNA synthesis. The polypeptide is Xanthine phosphoribosyltransferase (Clostridium novyi (strain NT)).